Here is a 282-residue protein sequence, read N- to C-terminus: Cholesterol 25-hydroxylase-like protein 1, member 1 (282 aa).

Residue N3 is glycosylated (N-linked (GlcNAc...) asparagine). The next 3 helical transmembrane spans lie at 40–60 (FFPVLLAFSSYIIFSVPFAVL), 85–107 (MLRTLWTAVYNHLVFVLPAVLIT), and 127–147 (FSGGLGALLVFDTQYFLWHMV). The region spanning 133–265 (ALLVFDTQYF…FSHWDKIFGT (133 aa)) is the Fatty acid hydroxylase domain. Positions 144–148 (WHMVH) match the Histidine box-1 motif. A Histidine box-2 motif is present at residues 159–163 (HAIHH). Residues 240–246 (AHDMHHQ) carry the Histidine box-3 motif.

The protein belongs to the sterol desaturase family. Fe cation is required as a cofactor.

It is found in the endoplasmic reticulum membrane. In terms of biological role, may catalyze the formation of 25-hydroxycholesterol from cholesterol. The sequence is that of Cholesterol 25-hydroxylase-like protein 1, member 1 (ch25hl1.1) from Danio rerio (Zebrafish).